The chain runs to 287 residues: Shikimate kinase (287 aa).

An ATP-binding site is contributed by proline 87–alanine 97.

Belongs to the GHMP kinase family. Archaeal shikimate kinase subfamily.

The protein localises to the cytoplasm. It carries out the reaction shikimate + ATP = 3-phosphoshikimate + ADP + H(+). It participates in metabolic intermediate biosynthesis; chorismate biosynthesis; chorismate from D-erythrose 4-phosphate and phosphoenolpyruvate: step 5/7. The chain is Shikimate kinase from Methanococcoides burtonii (strain DSM 6242 / NBRC 107633 / OCM 468 / ACE-M).